The primary structure comprises 222 residues: Protein-L-isoaspartate O-methyltransferase (222 aa).

Residue S72 is part of the active site.

This sequence belongs to the methyltransferase superfamily. L-isoaspartyl/D-aspartyl protein methyltransferase family.

Its subcellular location is the cytoplasm. It catalyses the reaction [protein]-L-isoaspartate + S-adenosyl-L-methionine = [protein]-L-isoaspartate alpha-methyl ester + S-adenosyl-L-homocysteine. In terms of biological role, catalyzes the methyl esterification of L-isoaspartyl residues in peptides and proteins that result from spontaneous decomposition of normal L-aspartyl and L-asparaginyl residues. It plays a role in the repair and/or degradation of damaged proteins. The chain is Protein-L-isoaspartate O-methyltransferase from Picosynechococcus sp. (strain ATCC 27264 / PCC 7002 / PR-6) (Agmenellum quadruplicatum).